We begin with the raw amino-acid sequence, 207 residues long: Macrophage immunometabolism regulator (207 aa).

An N-acetylmethionine modification is found at Met1. Residues 1 to 41 form a disordered region; that stretch reads MEVDVNGESRSALTTLPLPVAEASSPGKAEAEKPRCSSTPC. A phosphoserine mark is found at Ser25, Ser140, and Ser167.

Belongs to the UNC119-binding protein family. In terms of assembly, interacts with UNC119 and UNC119B; interaction preferentially takes place when UNC119 and UNC119B are unliganded with myristoylated proteins.

The protein localises to the cytoplasm. It localises to the cell projection. It is found in the cilium. Functionally, regulates the macrophage function, by enhancing the resolution of inflammation and wound repair functions mediated by M2 macrophages. The regulation of macrophage function is, due at least in part, to its ability to inhibit glycolysis. May play also a role in trafficking of proteins via its interaction with UNC119 and UNC119B cargo adapters: may help the release of UNC119 and UNC119B cargo or the recycling of UNC119 and UNC119B. May play a role in ciliary membrane localization via its interaction with UNC119B and protein transport into photoreceptor cells. The protein is Macrophage immunometabolism regulator (MACIR) of Bos taurus (Bovine).